Here is a 332-residue protein sequence, read N- to C-terminus: Aspartate carbamoyltransferase catalytic subunit (332 aa).

Residues 1–20 (MPNTHDTKNNVSPSEYAKFD) form a disordered region. Residues arginine 72 and threonine 73 each coordinate carbamoyl phosphate. Lysine 100 is an L-aspartate binding site. Positions 122, 152, and 155 each coordinate carbamoyl phosphate. The L-aspartate site is built by arginine 186 and arginine 241. Carbamoyl phosphate is bound by residues glycine 282 and proline 283.

Belongs to the aspartate/ornithine carbamoyltransferase superfamily. ATCase family. In terms of assembly, heterododecamer (2C3:3R2) of six catalytic PyrB chains organized as two trimers (C3), and six regulatory PyrI chains organized as three dimers (R2).

The catalysed reaction is carbamoyl phosphate + L-aspartate = N-carbamoyl-L-aspartate + phosphate + H(+). It functions in the pathway pyrimidine metabolism; UMP biosynthesis via de novo pathway; (S)-dihydroorotate from bicarbonate: step 2/3. Catalyzes the condensation of carbamoyl phosphate and aspartate to form carbamoyl aspartate and inorganic phosphate, the committed step in the de novo pyrimidine nucleotide biosynthesis pathway. This chain is Aspartate carbamoyltransferase catalytic subunit, found in Psychrobacter sp. (strain TAD1).